Here is an 881-residue protein sequence, read N- to C-terminus: Putative cation exchanger C521.04c (881 aa).

The span at 1 to 19 (MSQPADINQSESSAETITQ) shows a compositional bias: polar residues. Disordered regions lie at residues 1-39 (MSQP…EQNL) and 52-142 (ADAT…LRSE). Basic and acidic residues predominate over residues 63–77 (NDRDIYSPREIDQYT). Polar residues predominate over residues 83–95 (RTDPSTSTISNAR). Low complexity predominate over residues 99-113 (RNSVSRLSRSSSNVR). Position 129 is a phosphoserine (Ser129). Helical transmembrane passes span 200-220 (IWLI…YIFF), 329-349 (LIIA…IFFV), 407-427 (IYII…FGFF), 438-458 (VFLF…IGMA), 471-491 (GAFI…SVAL), 504-524 (IGSI…AGAI), 537-557 (GATS…TMLF), and 594-614 (LPFT…GLWF). A disordered region spans residues 641–717 (VGEPVNQDTA…SQNSHGDDAP (77 aa)). Residues 646-657 (NQDTAGNMSDSS) show a composition bias toward polar residues. Residues 678–688 (SSGLSSNGSEN) are compositionally biased toward low complexity. The next 5 helical transmembrane spans lie at 726–746 (IILL…VEHV), 762–782 (LTLF…SFAL), 794–814 (SAYA…YSLF), 828–848 (LFTM…VFLL), and 859–879 (YFKG…FTFF).

The protein belongs to the Ca(2+):cation antiporter (CaCA) (TC 2.A.19) family.

The protein localises to the endoplasmic reticulum membrane. Its function is as follows. Putative cation exchanger. The sequence is that of Putative cation exchanger C521.04c from Schizosaccharomyces pombe (strain 972 / ATCC 24843) (Fission yeast).